Here is a 365-residue protein sequence, read N- to C-terminus: Selina-4(15),7(11)-diene synthase ((2E,6E)-farnesyl diphosphate cyclizing) (365 aa).

Mg(2+) is bound by residues Asp-82 and Glu-87. The DDXXXE motif signature appears at 82–87 (DDGHCE). Arg-178 lines the substrate pocket. Mg(2+)-binding residues include Asn-224 and Ser-228. Position 231 (Lys-231) interacts with substrate. Glu-232 provides a ligand contact to Mg(2+). Substrate is bound at residue 310–311 (RY).

Belongs to the terpene synthase family. In terms of assembly, monomer. Mg(2+) is required as a cofactor.

The enzyme catalyses (2E,6E)-farnesyl diphosphate = selina-4(15),7(11)-diene + diphosphate. Its pathway is secondary metabolite biosynthesis; terpenoid biosynthesis. Catalyzes the conversion of (2E,6E)-farnesyl diphosphate (FPP) to yield the bicyclic sesquiterpene selina-4(15),7(11)-diene via a 1,10-cyclization, which requires the abstraction of the pyrophosphate from FPP leading to a (E,E)-germacradienyl cation. The only accepted substrate is (2E,6E)-farnesyl diphosphate (FPP). In Streptomyces pristinaespiralis (strain ATCC 25486 / DSM 40338 / CBS 914.69 / JCM 4507 / KCC S-0507 / NBRC 13074 / NRRL 2958 / 5647), this protein is Selina-4(15),7(11)-diene synthase ((2E,6E)-farnesyl diphosphate cyclizing).